Here is a 126-residue protein sequence, read N- to C-terminus: Protein translocase subunit SecE (126 aa).

3 consecutive transmembrane segments (helical) span residues 20–40, 42–62, and 97–117; these read WLAA…YGEM, VVVR…VAAT, and IVLA…GIMV.

Belongs to the SecE/SEC61-gamma family. Component of the Sec protein translocase complex. Heterotrimer consisting of SecY, SecE and SecG subunits. The heterotrimers can form oligomers, although 1 heterotrimer is thought to be able to translocate proteins. Interacts with the ribosome. Interacts with SecDF, and other proteins may be involved. Interacts with SecA.

It is found in the cell inner membrane. Its function is as follows. Essential subunit of the Sec protein translocation channel SecYEG. Clamps together the 2 halves of SecY. May contact the channel plug during translocation. The chain is Protein translocase subunit SecE from Vibrio alginolyticus.